The sequence spans 353 residues: Delta-aminolevulinic acid dehydratase (353 aa).

Lysine 221 (schiff-base intermediate with substrate) is an active-site residue. Positions 231 and 244 each coordinate 5-aminolevulinate. A Mg(2+)-binding site is contributed by glutamate 260. Lysine 275 acts as the Schiff-base intermediate with substrate in catalysis. 5-aminolevulinate contacts are provided by serine 301 and tyrosine 340.

This sequence belongs to the ALAD family. As to quaternary structure, homooctamer. Mg(2+) serves as cofactor.

The enzyme catalyses 2 5-aminolevulinate = porphobilinogen + 2 H2O + H(+). The protein operates within porphyrin-containing compound metabolism; protoporphyrin-IX biosynthesis; coproporphyrinogen-III from 5-aminolevulinate: step 1/4. In terms of biological role, catalyzes an early step in the biosynthesis of tetrapyrroles. Binds two molecules of 5-aminolevulinate per subunit, each at a distinct site, and catalyzes their condensation to form porphobilinogen. Required for nodule development. This chain is Delta-aminolevulinic acid dehydratase (hemB), found in Bradyrhizobium diazoefficiens (strain JCM 10833 / BCRC 13528 / IAM 13628 / NBRC 14792 / USDA 110).